The following is a 190-amino-acid chain: Ras-like GTP-binding protein RhoL (190 aa).

Residue 18 to 25 coordinates GTP; that stretch reads GDGMVGKT. The Effector region motif lies at 40–48; that stretch reads YIPTVFDNH. Residues 65–69 and 123–126 contribute to the GTP site; these read DTAGQ and TKLD. Cys-187 bears the Cysteine methyl ester mark. Cys-187 carries S-geranylgeranyl cysteine lipidation. Positions 188–190 are cleaved as a propeptide — removed in mature form; that stretch reads KIL.

This sequence belongs to the small GTPase superfamily. Rho family. As to expression, highly expressed in the embryonic cephalic mesoderm starting from stage 6 and fading by stage 11. Hemocyte precursor cells.

It is found in the cell membrane. Its function is as follows. Essential for the maturation of hemocytes. This Drosophila melanogaster (Fruit fly) protein is Ras-like GTP-binding protein RhoL (RhoL).